The chain runs to 87 residues: UPF0235 protein TGRD_618 (87 aa).

Belongs to the UPF0235 family.

The chain is UPF0235 protein TGRD_618 from Endomicrobium trichonymphae.